Consider the following 287-residue polypeptide: Protein REVEILLE 2 (287 aa).

Positions 31 to 85 constitute an HTH myb-type domain; the sequence is TITKQREKWTEAEHEKFVEALKLYGRAWRRIEEHVGTKTAVQIRSHAQKFFTKVA. The segment at residues 58–81 is a DNA-binding region (H-T-H motif); that stretch reads WRRIEEHVGTKTAVQIRSHAQKFF. The tract at residues 134–177 is disordered; the sequence is QDEDNRSPTSVLSAHGSDGLGSIGSNSPNSSSAELSSHTEESLS. The span at 156-169 shows a compositional bias: low complexity; the sequence is IGSNSPNSSSAELS.

It localises to the nucleus. Its function is as follows. Positive regulator for cold-responsive gene expression and cold tolerance. Part of a regulatory feedback loop that controls a subset of the circadian outputs and modulates the central oscillator. Negatively self-regulates its own expression. In Arabidopsis thaliana (Mouse-ear cress), this protein is Protein REVEILLE 2 (RVE2).